Consider the following 251-residue polypeptide: Capsid protein (251 aa).

Residues 1-29 (MPKRDAPWRSMAGTSKVSRNANYSPRSGI) are disordered. The Bipartite nuclear localization signal motif lies at 3–20 (KRDAPWRSMAGTSKVSRN). Positions 12-25 (AGTSKVSRNANYSP) are enriched in polar residues. The Nuclear localization signal motif lies at 35 to 49 (KAAEWVNRPMYRKPR). A zinc finger spans residues 63–80 (CEGPCKVQSFEQRHDILH). A Nuclear export signal motif is present at residues 96–117 (ITHRVGKRFCVKSVYILGKIWM). Positions 195-242 (RRFWKVNNHVVYNHQEAGKYENHTENALLLYMACTHASNPVYATLKIR) match the Bipartite nuclear localization signal motif.

Belongs to the geminiviridae capsid protein family. Homomultimer. Binds to single-stranded and double-stranded viral DNA. Interacts (via nuclear localization signals) with host importin alpha-1a.

The protein localises to the virion. It localises to the host nucleus. Functionally, encapsidates the viral DNA into characteristic twinned ('geminate') particles. Binds the genomic viral ssDNA and shuttles it into and out of the cell nucleus. The CP of bipartite geminiviruses is not required for cell-to-cell or systemic movement. The protein is Capsid protein of Solanum tuberosum (Potato).